A 241-amino-acid polypeptide reads, in one-letter code: Pyridoxine 5'-phosphate synthase (241 aa).

3-amino-2-oxopropyl phosphate is bound at residue Asn7. Residue 9-10 (DH) participates in 1-deoxy-D-xylulose 5-phosphate binding. Residue Arg18 coordinates 3-amino-2-oxopropyl phosphate. The active-site Proton acceptor is the His43. 1-deoxy-D-xylulose 5-phosphate is bound by residues Arg45 and His50. Residue Glu70 is the Proton acceptor of the active site. Position 100 (Thr100) interacts with 1-deoxy-D-xylulose 5-phosphate. The active-site Proton donor is His190. Residues Gly191 and 212–213 (GH) contribute to the 3-amino-2-oxopropyl phosphate site.

It belongs to the PNP synthase family. As to quaternary structure, homooctamer; tetramer of dimers.

Its subcellular location is the cytoplasm. The catalysed reaction is 3-amino-2-oxopropyl phosphate + 1-deoxy-D-xylulose 5-phosphate = pyridoxine 5'-phosphate + phosphate + 2 H2O + H(+). It participates in cofactor biosynthesis; pyridoxine 5'-phosphate biosynthesis; pyridoxine 5'-phosphate from D-erythrose 4-phosphate: step 5/5. Catalyzes the complicated ring closure reaction between the two acyclic compounds 1-deoxy-D-xylulose-5-phosphate (DXP) and 3-amino-2-oxopropyl phosphate (1-amino-acetone-3-phosphate or AAP) to form pyridoxine 5'-phosphate (PNP) and inorganic phosphate. This is Pyridoxine 5'-phosphate synthase from Bordetella avium (strain 197N).